Here is a 120-residue protein sequence, read N- to C-terminus: Small ribosomal subunit protein uS13 (120 aa).

Residues 93-120 (RKGLPVRGQTTKNNARTRKGKKKTVGSK) form a disordered region. Positions 107–120 (ARTRKGKKKTVGSK) are enriched in basic residues.

It belongs to the universal ribosomal protein uS13 family. As to quaternary structure, part of the 30S ribosomal subunit. Forms a loose heterodimer with protein S19. Forms two bridges to the 50S subunit in the 70S ribosome.

Its function is as follows. Located at the top of the head of the 30S subunit, it contacts several helices of the 16S rRNA. In the 70S ribosome it contacts the 23S rRNA (bridge B1a) and protein L5 of the 50S subunit (bridge B1b), connecting the 2 subunits; these bridges are implicated in subunit movement. Contacts the tRNAs in the A and P-sites. The chain is Small ribosomal subunit protein uS13 from Helicobacter acinonychis (strain Sheeba).